Reading from the N-terminus, the 457-residue chain is Cysteine--tRNA ligase (457 aa).

Zn(2+) is bound at residue Cys-29. The short motif at 31–41 (PTVYDNPHIGN) is the 'HIGH' region element. Cys-214, His-239, and Glu-243 together coordinate Zn(2+). Positions 272-276 (KMSKS) match the 'KMSKS' region motif. Lys-275 is a binding site for ATP.

This sequence belongs to the class-I aminoacyl-tRNA synthetase family. In terms of assembly, monomer. It depends on Zn(2+) as a cofactor.

Its subcellular location is the cytoplasm. The catalysed reaction is tRNA(Cys) + L-cysteine + ATP = L-cysteinyl-tRNA(Cys) + AMP + diphosphate. The sequence is that of Cysteine--tRNA ligase (cysS) from Rickettsia prowazekii (strain Madrid E).